We begin with the raw amino-acid sequence, 318 residues long: HPr kinase/phosphorylase (318 aa).

Active-site residues include His146 and Lys167. Residue 161-168 (GESGLGKS) coordinates ATP. Ser168 is a Mg(2+) binding site. Residue Asp185 is the Proton acceptor; for phosphorylation activity. Proton donor; for dephosphorylation activity of the active site. Residues 209–218 (LEVRGIGLLD) form an important for the catalytic mechanism of both phosphorylation and dephosphorylation region. Glu210 lines the Mg(2+) pocket. Arg252 is a catalytic residue. The interval 273-278 (QVVAGR) is important for the catalytic mechanism of dephosphorylation.

The protein belongs to the HPrK/P family. Homohexamer. Mg(2+) serves as cofactor.

The enzyme catalyses [HPr protein]-L-serine + ATP = [HPr protein]-O-phospho-L-serine + ADP + H(+). The catalysed reaction is [HPr protein]-O-phospho-L-serine + phosphate + H(+) = [HPr protein]-L-serine + diphosphate. Catalyzes the ATP- as well as the pyrophosphate-dependent phosphorylation of a specific serine residue in HPr, a phosphocarrier protein of the phosphoenolpyruvate-dependent sugar phosphotransferase system (PTS). HprK/P also catalyzes the pyrophosphate-producing, inorganic phosphate-dependent dephosphorylation (phosphorolysis) of seryl-phosphorylated HPr (P-Ser-HPr). The polypeptide is HPr kinase/phosphorylase (Acidovorax sp. (strain JS42)).